Reading from the N-terminus, the 153-residue chain is MSDEAKEKRELESQKESSHNKSEKSVEPKPKRRRRRNYDDYDAEVAKEETKAKNGLTKSENNGTVEDSESDMDDAKLDALMGNEGEEEEDDLAEIDTSNIITSGRRTRGKVIDYKKTAEELDKKEPSTGSKDDVGYGEKEEDDEDEEDDDFKE.

Residues 1-29 show a composition bias toward basic and acidic residues; it reads MSDEAKEKRELESQKESSHNKSEKSVEPK. The disordered stretch occupies residues 1 to 153; that stretch reads MSDEAKEKRE…EDEEDDDFKE (153 aa). S2 is modified (N-acetylserine). A compositionally biased stretch (polar residues) spans 56-65; that stretch reads LTKSENNGTV. Residues S68 and S70 each carry the phosphoserine modification. The span at 84–94 shows a compositional bias: acidic residues; it reads EGEEEEDDLAE. Positions 87 to 108 are important for H2A.Z-H2B binding; sequence EEEDDLAEIDTSNIITSGRRTR. The span at 110 to 138 shows a compositional bias: basic and acidic residues; sequence KVIDYKKTAEELDKKEPSTGSKDDVGYGE. The segment covering 139 to 153 has biased composition (acidic residues); it reads KEEDDEDEEDDDFKE.

This sequence belongs to the CHZ1 family. Forms a heterotrimer with H2A.Z-H2B, stabilizing the association of the histone dimer. Also, with a lower affinity, forms a heterotrimer with H2A-H2B.

The protein resides in the nucleus. Forms a chaperone-bound H2A.Z-H2B complex that acts as a source for SWR1 complex-dependent H2A to H2A.Z histone replacement in chromatin. The protein is Histone H2A.Z-specific chaperone CHZ1 (CHZ1) of Saccharomyces cerevisiae (strain ATCC 204508 / S288c) (Baker's yeast).